A 236-amino-acid polypeptide reads, in one-letter code: Demethylmenaquinone methyltransferase (236 aa).

Residues Thr-58, Asp-79, and 106–107 (NA) contribute to the S-adenosyl-L-methionine site.

The protein belongs to the class I-like SAM-binding methyltransferase superfamily. MenG/UbiE family.

It catalyses the reaction a 2-demethylmenaquinol + S-adenosyl-L-methionine = a menaquinol + S-adenosyl-L-homocysteine + H(+). The protein operates within quinol/quinone metabolism; menaquinone biosynthesis; menaquinol from 1,4-dihydroxy-2-naphthoate: step 2/2. In terms of biological role, methyltransferase required for the conversion of demethylmenaquinol (DMKH2) to menaquinol (MKH2). In Alkalihalophilus pseudofirmus (strain ATCC BAA-2126 / JCM 17055 / OF4) (Bacillus pseudofirmus), this protein is Demethylmenaquinone methyltransferase.